The chain runs to 580 residues: tRNA-guanine(15) transglycosylase (580 aa).

D91 acts as the Nucleophile in catalysis. The substrate site is built by D126 and A192. 3 residues coordinate Zn(2+): C275, C277, and C280. Residues 504 to 579 form the PUA domain; that stretch reads RMRVVVDEDA…LAVKVRRGVE (76 aa).

It belongs to the archaeosine tRNA-ribosyltransferase family. Zn(2+) serves as cofactor.

The enzyme catalyses guanosine(15) in tRNA + 7-cyano-7-deazaguanine = 7-cyano-7-carbaguanosine(15) in tRNA + guanine. It functions in the pathway tRNA modification; archaeosine-tRNA biosynthesis. Functionally, exchanges the guanine residue with 7-cyano-7-deazaguanine (preQ0) at position 15 in the dihydrouridine loop (D-loop) of archaeal tRNAs. The protein is tRNA-guanine(15) transglycosylase of Thermococcus onnurineus (strain NA1).